A 159-amino-acid chain; its full sequence is Voltage-dependent N-type calcium channel subunit alpha-1B (159 aa).

A helical transmembrane segment spans residues 1–5 (LVTEI). The IV repeat unit spans residues 1–159 (LVTEIADTDN…LMLNLFVAVI (159 aa)). Topologically, residues 6–13 (ADTDNFIN) are extracellular. An N-linked (GlcNAc...) asparagine glycan is attached at Asn-13. The helical transmembrane segment at 14–32 (LSFLRLFRAARLIKLLRQG) threads the bilayer. Residues 33-51 (YTIRILLWTFVQSFKALPY) lie on the Cytoplasmic side of the membrane. A helical transmembrane segment spans residues 52–71 (VCLLIAMLFFIYAIIGMQVF). At 72-135 (GNIALNDETS…LTKNECGSDF (64 aa)) the chain is on the extracellular side. Residues 136–155 (AYFYFVSFIFLCSFLMLNLF) form a helical membrane-spanning segment. The Cytoplasmic portion of the chain corresponds to 156–159 (VAVI).

Belongs to the calcium channel alpha-1 subunit (TC 1.A.1.11) family. CACNA1B subfamily. As to quaternary structure, multisubunit complex consisting of alpha-1, alpha-2, beta and delta subunits in a 1:1:1:1 ratio. The channel activity is directed by the pore-forming and voltage-sensitive alpha-1 subunit. In many cases, this subunit is sufficient to generate voltage-sensitive calcium channel activity. The auxiliary subunits beta and alpha-2/delta linked by a disulfide bridge regulate the channel activity. Interacts with RIMBP2. In terms of processing, phosphorylated in vitro by CaM-kinase II, PKA, PKC and CGPK.

It is found in the membrane. The catalysed reaction is Ca(2+)(in) = Ca(2+)(out). In terms of biological role, voltage-sensitive calcium channels (VSCC) mediate the entry of calcium ions into excitable cells and are also involved in a variety of calcium-dependent processes, including muscle contraction, hormone or neurotransmitter release, gene expression, cell motility, cell division and cell death. This alpha-1B subunit gives rise to N-type calcium currents. N-type calcium channels belong to the 'high-voltage activated' (HVA) group. They are involved in pain signaling. Calcium channels containing alpha-1B subunit may play a role in directed migration of immature neurons. Mediates Ca(2+) release probability at hippocampal neuronal soma and synaptic terminals. In Gallus gallus (Chicken), this protein is Voltage-dependent N-type calcium channel subunit alpha-1B (CACNA1B).